The chain runs to 519 residues: Xylose import ATP-binding protein XylG (519 aa).

2 ABC transporter domains span residues 6 to 245 (MTMR…VGRE) and 262 to 507 (FEAR…IRPV). 38–45 (GENGAGKS) is a binding site for ATP.

The protein belongs to the ABC transporter superfamily. Xylose importer (TC 3.A.1.2.4) family. In terms of assembly, the complex is composed of two ATP-binding proteins (XylG), two transmembrane proteins (XylH) and a solute-binding protein (XylF).

It is found in the cell inner membrane. The enzyme catalyses D-xylose(out) + ATP + H2O = D-xylose(in) + ADP + phosphate + H(+). Part of the ABC transporter complex XylFGH involved in xylose import. Responsible for energy coupling to the transport system. This Paraburkholderia xenovorans (strain LB400) protein is Xylose import ATP-binding protein XylG.